Here is a 1235-residue protein sequence, read N- to C-terminus: Phosphorylase b kinase regulatory subunit alpha, liver isoform (1235 aa).

A disordered region spans residues 636 to 655 (FSPDSEPDLGGYLEDSSPQE). Residues Ser695, Ser729, and Ser735 each carry the phosphoserine modification. The calmodulin-binding stretch occupies residues 807–837 (LSELYGKAGLNQEWSLIRYISGLLRKKVEVL). Residues Ser983, Ser1015, and Ser1044 each carry the phosphoserine modification. Residues 1033-1060 (SIKSVRSSTPSSPTGTSSTDSGGQHLGW) are disordered. Low complexity predominate over residues 1039–1055 (SSTPSSPTGTSSTDSGG). The interval 1059–1099 (GWGEQQGQWLRRRRLDGAINRVPVGFYQKVWKILQKCHGLS) is calmodulin-binding. Cys1232 carries the S-farnesyl cysteine lipid modification.

It belongs to the phosphorylase b kinase regulatory chain family. In terms of assembly, hexadecamer of 4 heterotetramers, each composed of alpha, beta, gamma, and delta subunits. Alpha (PHKA1 or PHKA2) and beta (PHKB) are regulatory subunits, gamma (PHKG1 or PHKG2) is the catalytic subunit, and delta is calmodulin. In terms of processing, although the final Cys may be farnesylated, the terminal tripeptide is probably not removed, and the C-terminus is not methylated.

Its subcellular location is the cell membrane. Its pathway is glycan biosynthesis; glycogen metabolism. By phosphorylation of various serine residues and by calcium. Functionally, phosphorylase b kinase catalyzes the phosphorylation of serine in certain substrates, including troponin I. The alpha chain may bind calmodulin. In Mus musculus (Mouse), this protein is Phosphorylase b kinase regulatory subunit alpha, liver isoform (Phka2).